Reading from the N-terminus, the 216-residue chain is Corrinoid protein DSY3155 (216 aa).

Residues 1 to 90 (MIMSLLDELK…EIAKKGMSEG (90 aa)) enclose the B12-binding N-terminal domain. Residues 93 to 216 (KGKIVLGTVE…VELANKILGK (124 aa)) enclose the B12-binding domain. His-106 provides a ligand contact to methylcob(III)alamin.

It belongs to the methylamine corrinoid protein family.

Probably harbors a corrinoid prosthetic group and acts as a methyl group carrier between MtgB and MtgA. A methyl group from glycine betaine is likely first transferred to the corrinoid prosthetic group of the enzyme by MtgB, and then transferred to tetrahydrofolate (THF) by MtgA. The methyl group may then be ultimately converted to carbon dioxide, and its oxidation would also provide reducing equivalents for anaerobic respiration. Thus, may function in the pathway that allows anaerobic methylotrophic growth of D.hafniense using glycine betaine. The polypeptide is Corrinoid protein DSY3155 (Desulfitobacterium hafniense (strain Y51)).